The chain runs to 231 residues: Protein C activator (231 aa).

The Peptidase S1 domain maps to 1-222 (VIGGDECNIN…YTDWIQSIIS (222 aa)). Intrachain disulfides connect Cys-7–Cys-138, Cys-25–Cys-41, Cys-73–Cys-229, Cys-117–Cys-183, Cys-149–Cys-162, and Cys-173–Cys-198. The N-linked (GlcNAc...) asparagine glycan is linked to Asn-21. The active-site Charge relay system is the His-40. N-linked (GlcNAc...) asparagine glycosylation occurs at Asn-78. Asp-85 serves as the catalytic Charge relay system. Asn-129 carries N-linked (GlcNAc...) asparagine glycosylation. Catalysis depends on Ser-177, which acts as the Charge relay system.

The protein belongs to the peptidase S1 family. Snake venom subfamily. Monomer. In terms of tissue distribution, expressed by the venom gland.

The protein localises to the secreted. In terms of biological role, snake venom serine protease that selectively cleaves the heavy chain of protein C (PROC). This activation is thrombomodulin-independent. The sequence is that of Protein C activator from Agkistrodon contortrix contortrix (Southern copperhead).